A 521-amino-acid polypeptide reads, in one-letter code: MSL complex subunit 3 (521 aa).

In terms of domain architecture, Tudor-knot spans 13 to 71; it reads SGEKVLCFEPDPTKARVLYDAKIVDVIVGKDEKGRKIPEYLIHFNGWNRSWDRWAAEDH. 2 disordered regions span residues 114 to 166 and 298 to 409; these read KGLP…TRRE and ATST…PSKE. Acidic residues predominate over residues 139-149; that stretch reads KDEEISEESDI. Basic and acidic residues predominate over residues 150-166; the sequence is EEKTEVKEEPELQTRRE. Positions 168–517 constitute an MRG domain; the sequence is EERTITIEIP…CEAHYSTKNP (350 aa). The interval 290-440 is required for the histone acetyltransferase activity of the MSL complex; it reads FFLPIKESAT…WKLVPDNYPP (151 aa). Phosphoserine is present on residues serine 309 and serine 311. The segment covering 316–329 has biased composition (low complexity); it reads NPSTPQSTESQPTT. Phosphoserine is present on residues serine 367 and serine 400. At threonine 405 the chain carries Phosphothreonine. A phosphoserine mark is found at serine 407 and serine 411.

As to quaternary structure, component of the MSL histone acetyltransferase complex at least composed of the KAT8/MOF, MSL1/hampin, MSL2 and MSL3. Interacts (via the MRG domain) with MSL1 and KAT8/MOF. Expressed in many tissues including liver, pancreas, heart, lung, kidney, skeletal muscle, brain, and placenta, with highest expression in skeletal muscle and heart.

It localises to the nucleus. Functionally, non-catalytic component of the MSL histone acetyltransferase complex, a multiprotein complex that mediates the majority of histone H4 acetylation at 'Lys-16' (H4K16ac), an epigenetic mark that prevents chromatin compaction. The MSL complex is required for chromosome stability and genome integrity by maintaining homeostatic levels of H4K16ac. The MSL complex is also involved in gene dosage by promoting up-regulation of genes expressed by the X chromosome. X up-regulation is required to compensate for autosomal biallelic expression. The MSL complex also participates in gene dosage compensation by promoting expression of Tsix non-coding RNA. Acts as a histone reader that specifically recognizes and binds histone H4 monomethylated at 'Lys-20' (H4K20Me1) in a DNA-dependent manner and is proposed to be involved in chromosomal targeting of the MSL complex. May play a role X inactivation in females. This is MSL complex subunit 3 from Homo sapiens (Human).